Consider the following 462-residue polypeptide: Stabilizer of axonemal microtubules 1 (462 aa).

Mn regions lie at residues 30-64, 65-97, 98-131, 132-165, 166-199, 200-232, 233-266, 267-299, 300-332, 333-366, 367-400, and 401-434; these read KPCF…KVNI, PMEG…PIQD, EMDF…QCND, KMEC…PASC, RFDH…LCNI, PLES…PSEV, PFDS…GLDI, PFPS…PPEG, KMDL…KKSD, RFES…FSDE, PMEY…RVNI, and PLEG…IFDE.

This sequence belongs to the FAM154 family. Associates with microtubules via the Mn regions.

Its subcellular location is the cytoplasm. It is found in the cytoskeleton. The protein localises to the microtubule organizing center. It localises to the centrosome. The protein resides in the centriole. Its subcellular location is the cilium basal body. It is found in the cilium axoneme. Functionally, may play a role in the regulation of cilium length. Stabilizes microtubules at low temperature. The polypeptide is Stabilizer of axonemal microtubules 1 (Saxo1) (Rattus norvegicus (Rat)).